We begin with the raw amino-acid sequence, 43 residues long: Potassium channel toxin gamma-KTx 4.5 (43 aa).

4 disulfides stabilise this stretch: cysteine 5-cysteine 23, cysteine 11-cysteine 34, cysteine 20-cysteine 39, and cysteine 24-cysteine 41.

This sequence belongs to the ergtoxin family. Gamma-KTx 4 subfamily. Expressed by the venom gland.

It is found in the secreted. Functionally, reversibly blocks Kv11/ERG potassium channels. In Centruroides exilicauda (Bark scorpion), this protein is Potassium channel toxin gamma-KTx 4.5.